Reading from the N-terminus, the 273-residue chain is Serine acetyltransferase (273 aa).

Belongs to the transferase hexapeptide repeat family. Part of the cysteine synthase complex formed at a ratio of 1 copy of this protein and 2 copies of O-acetylserine sulfhydrylase (cysK). The complex reversibly dissociates in the presence of O-acetyl-L-serine in the absence of hydrogen sulfide.

The protein resides in the cytoplasm. The enzyme catalyses L-serine + acetyl-CoA = O-acetyl-L-serine + CoA. It functions in the pathway amino-acid biosynthesis; L-cysteine biosynthesis; L-cysteine from L-serine: step 1/2. Its activity is regulated as follows. Sensitive to feedback inhibition by L-cysteine. This is Serine acetyltransferase (cysE) from Salmonella typhimurium (strain LT2 / SGSC1412 / ATCC 700720).